A 1805-amino-acid polypeptide reads, in one-letter code: Kinesin-like protein KIF13A (1805 aa).

The Kinesin motor domain maps to 5-352 (KVKVAVRVRP…LRYADRAKRI (348 aa)). 102-109 (GQTGSGKS) lines the ATP pocket. Positions 359 to 436 (NEDPNAKVIR…QLESMGISLE (78 aa)) form a coiled coil. In terms of domain architecture, FHA spans 469–519 (HTRVGADTSQDIQLFGIGIQPQHCEIDIASDGDVTLTPKENARSCVNGTLV). Over residues 556-567 (EKETGPPEHDLD) the composition is skewed to basic and acidic residues. Disordered stretches follow at residues 556 to 575 (EKET…ASSE) and 633 to 656 (QQLS…SQTA). Coiled-coil stretches lie at residues 602 to 775 (VQVL…LYGK) and 1100 to 1138 (DALI…EQWV). Ser636 is modified (phosphoserine). The residue at position 1287 (Ser1287) is a Phosphoserine. Polar residues predominate over residues 1385–1396 (TPNVHNVSSSRP). The segment at 1385-1404 (TPNVHNVSSSRPDLSGFDED) is disordered. Phosphoserine occurs at positions 1454, 1481, 1490, and 1494. A disordered region spans residues 1507 to 1531 (PSGSNGSSMPVEHNSKREKKIDSEE). Positions 1518 to 1547 (EHNSKREKKIDSEEEENELEAINRKLISSQ) form a coiled coil. Residues 1519-1528 (HNSKREKKID) show a composition bias toward basic and acidic residues. Phosphoserine occurs at positions 1529 and 1572. Over residues 1612–1621 (MVVPSSDSSD) the composition is skewed to low complexity. Residues 1612–1645 (MVVPSSDSSDQLAIQTKDADSTEHSTPSLVHDFR) form a disordered region. Phosphoserine occurs at positions 1648 and 1698. The segment at 1749–1779 (GLTDSSAGELSSRRSLPNKTGGKTVSDGLHH) is disordered. Positions 1751-1771 (TDSSAGELSSRRSLPNKTGGK) are enriched in polar residues.

Belongs to the TRAFAC class myosin-kinesin ATPase superfamily. Kinesin family. As to quaternary structure, interacts with AP2B1. Interacts with ZFYVE26. Interacts with AP1G1 and AP1G2. Widely expressed, with highest levels in heart, brain and skeletal muscle.

Its subcellular location is the cytoplasm. The protein resides in the cytoskeleton. It is found in the microtubule organizing center. The protein localises to the centrosome. It localises to the midbody. Its subcellular location is the endosome membrane. The protein resides in the golgi apparatus membrane. Its function is as follows. Plus end-directed microtubule-dependent motor protein involved in intracellular transport and regulating various processes such as mannose-6-phosphate receptor (M6PR) transport to the plasma membrane, endosomal sorting during melanosome biogenesis and cytokinesis. Mediates the transport of M6PR-containing vesicles from trans-Golgi network to the plasma membrane via direct interaction with the AP-1 complex. During melanosome maturation, required for delivering melanogenic enzymes from recycling endosomes to nascent melanosomes by creating peripheral recycling endosomal subdomains in melanocytes. Also required for the abscission step in cytokinesis: mediates translocation of ZFYVE26, and possibly TTC19, to the midbody during cytokinesis. The polypeptide is Kinesin-like protein KIF13A (KIF13A) (Homo sapiens (Human)).